The sequence spans 185 residues: Ribosome-recycling factor (185 aa).

This sequence belongs to the RRF family.

The protein resides in the cytoplasm. Functionally, responsible for the release of ribosomes from messenger RNA at the termination of protein biosynthesis. May increase the efficiency of translation by recycling ribosomes from one round of translation to another. The protein is Ribosome-recycling factor of Pectobacterium carotovorum subsp. carotovorum (strain PC1).